The following is a 362-amino-acid chain: UDP-N-acetylglucosamine--N-acetylmuramyl-(pentapeptide) pyrophosphoryl-undecaprenol N-acetylglucosamine transferase (362 aa).

Residues 15-17, N127, R165, S191, I247, 266-271, and Q292 each bind UDP-N-acetyl-alpha-D-glucosamine; these read TGG and ALTVSE.

The protein belongs to the glycosyltransferase 28 family. MurG subfamily.

The protein localises to the cell inner membrane. The catalysed reaction is di-trans,octa-cis-undecaprenyl diphospho-N-acetyl-alpha-D-muramoyl-L-alanyl-D-glutamyl-meso-2,6-diaminopimeloyl-D-alanyl-D-alanine + UDP-N-acetyl-alpha-D-glucosamine = di-trans,octa-cis-undecaprenyl diphospho-[N-acetyl-alpha-D-glucosaminyl-(1-&gt;4)]-N-acetyl-alpha-D-muramoyl-L-alanyl-D-glutamyl-meso-2,6-diaminopimeloyl-D-alanyl-D-alanine + UDP + H(+). The protein operates within cell wall biogenesis; peptidoglycan biosynthesis. Its function is as follows. Cell wall formation. Catalyzes the transfer of a GlcNAc subunit on undecaprenyl-pyrophosphoryl-MurNAc-pentapeptide (lipid intermediate I) to form undecaprenyl-pyrophosphoryl-MurNAc-(pentapeptide)GlcNAc (lipid intermediate II). In Shewanella sp. (strain MR-4), this protein is UDP-N-acetylglucosamine--N-acetylmuramyl-(pentapeptide) pyrophosphoryl-undecaprenol N-acetylglucosamine transferase.